The sequence spans 361 residues: Peptide chain release factor 1 (361 aa).

Residue glutamine 233 is modified to N5-methylglutamine. Basic and acidic residues predominate over residues 280-293 (ERRKKEQERADSRR). The interval 280-307 (ERRKKEQERADSRRGQVGSGDRSERIRT) is disordered.

Belongs to the prokaryotic/mitochondrial release factor family. In terms of processing, methylated by PrmC. Methylation increases the termination efficiency of RF1.

The protein resides in the cytoplasm. Functionally, peptide chain release factor 1 directs the termination of translation in response to the peptide chain termination codons UAG and UAA. This Rickettsia massiliae (strain Mtu5) protein is Peptide chain release factor 1.